The sequence spans 308 residues: MSESRQELLAWINQVTSLGLTRIEDCGKGYAMIQIFDSIYQDIPLKKVNFECNNEYQYINNWKVLQQVFLKKGIDKVVDPERLSRCKMQDNLEFVQWAKRFWDQYYPGGDYDALARRGNRGPANTRVMNSSAGATGPSRRRQVSSGSSTPSMTKSSANNNNVSSTANTAAVLRAKQAQQQITSLETQLYEVNETMFGLERERDFYFNKLREIEILVQTHLTTSPMSMENMLERIQAILYSTEDGFELPPDQPADLTTALTDHDTNNVAEEAQMTDLKDSETQRVPSAPDFVHARLQSLEVDDDENITF.

Residues 2–103 (SESRQELLAW…FVQWAKRFWD (102 aa)) enclose the Calponin-homology (CH) domain. The disordered stretch occupies residues 117–162 (RGNRGPANTRVMNSSAGATGPSRRRQVSSGSSTPSMTKSSANNNNV). Residues 144–162 (SSGSSTPSMTKSSANNNNV) show a composition bias toward low complexity. The EB1 C-terminal domain occupies 173 to 247 (RAKQAQQQIT…LYSTEDGFEL (75 aa)).

The protein belongs to the MAPRE family. Interacts with tea2.

It localises to the cytoplasm. Its subcellular location is the cytoskeleton. May play a role in regulating the integrity of microtubules possibly by influencing their stability. Involved in an anchoring mechanism to maintain tea2 and tip1 at growing microtubule ends. Strongly stimulates the ATPase activity of tea2. The sequence is that of Microtubule integrity protein mal3 (mal3) from Schizosaccharomyces pombe (strain 972 / ATCC 24843) (Fission yeast).